The primary structure comprises 952 residues: Leucine--tRNA ligase (952 aa).

The 'HIGH' region signature appears at 66 to 77 (PYPSGAGLHVGH). The 'KMSKS' region signature appears at 722-726 (KMGKS). Lys725 provides a ligand contact to ATP.

It belongs to the class-I aminoacyl-tRNA synthetase family.

Its subcellular location is the cytoplasm. The enzyme catalyses tRNA(Leu) + L-leucine + ATP = L-leucyl-tRNA(Leu) + AMP + diphosphate. This is Leucine--tRNA ligase from Corynebacterium glutamicum (strain R).